The primary structure comprises 379 residues: 1-deoxy-D-xylulose 5-phosphate reductoisomerase (379 aa).

Residues threonine 10, glycine 11, serine 12, valine 13, and asparagine 121 each contribute to the NADPH site. Lysine 122 lines the 1-deoxy-D-xylulose 5-phosphate pocket. Glutamate 123 serves as a coordination point for NADPH. A Mn(2+)-binding site is contributed by aspartate 147. Serine 148, glutamate 149, serine 173, and histidine 196 together coordinate 1-deoxy-D-xylulose 5-phosphate. Glutamate 149 lines the Mn(2+) pocket. Glycine 202 is an NADPH binding site. 1-deoxy-D-xylulose 5-phosphate-binding residues include serine 209, asparagine 214, lysine 215, and glutamate 218. Glutamate 218 is a binding site for Mn(2+).

It belongs to the DXR family. The cofactor is Mg(2+). Mn(2+) is required as a cofactor.

The catalysed reaction is 2-C-methyl-D-erythritol 4-phosphate + NADP(+) = 1-deoxy-D-xylulose 5-phosphate + NADPH + H(+). Its pathway is isoprenoid biosynthesis; isopentenyl diphosphate biosynthesis via DXP pathway; isopentenyl diphosphate from 1-deoxy-D-xylulose 5-phosphate: step 1/6. Its function is as follows. Catalyzes the NADPH-dependent rearrangement and reduction of 1-deoxy-D-xylulose-5-phosphate (DXP) to 2-C-methyl-D-erythritol 4-phosphate (MEP). This chain is 1-deoxy-D-xylulose 5-phosphate reductoisomerase, found in Chlamydia abortus (strain DSM 27085 / S26/3) (Chlamydophila abortus).